We begin with the raw amino-acid sequence, 147 residues long: MADFDMVLKCWGPMEADYATHGGLVLTRLFTEHPETLKLFPKFAGIAHGDLAGDAGVSAHGATVLNKLGDLLKARGAHAALLKPLSSSHATKHKIPIINFKLIAEVIGKVMEEKAGLDAAGQTALRNVMAVIIADMEADYKELGFTE.

A Globin domain is found at 2–141 (ADFDMVLKCW…IIADMEADYK (140 aa)). His-60 contacts nitrite. His-60 serves as a coordination point for O2. His-89 contacts heme b.

The protein belongs to the globin family. As to quaternary structure, monomeric.

The protein localises to the cytoplasm. It is found in the sarcoplasm. It carries out the reaction Fe(III)-heme b-[protein] + nitric oxide + H2O = Fe(II)-heme b-[protein] + nitrite + 2 H(+). It catalyses the reaction H2O2 + AH2 = A + 2 H2O. Its function is as follows. Monomeric heme protein which primary function is to store oxygen and facilitate its diffusion within muscle tissues. Reversibly binds oxygen through a pentacoordinated heme iron and enables its timely and efficient release as needed during periods of heightened demand. Depending on the oxidative conditions of tissues and cells, and in addition to its ability to bind oxygen, it also has a nitrite reductase activity whereby it regulates the production of bioactive nitric oxide. Under stress conditions, like hypoxia and anoxia, it also protects cells against reactive oxygen species thanks to its pseudoperoxidase activity. The protein is Myoglobin (mb) of Notothenia neglecta (Yellowbelly rockcod).